Reading from the N-terminus, the 117-residue chain is Large ribosomal subunit protein bL20 (117 aa).

This sequence belongs to the bacterial ribosomal protein bL20 family.

Binds directly to 23S ribosomal RNA and is necessary for the in vitro assembly process of the 50S ribosomal subunit. It is not involved in the protein synthesizing functions of that subunit. This is Large ribosomal subunit protein bL20 from Mannheimia succiniciproducens (strain KCTC 0769BP / MBEL55E).